Consider the following 199-residue polypeptide: IMP cyclohydrolase (199 aa).

Belongs to the archaeal IMP cyclohydrolase family.

The enzyme catalyses IMP + H2O = 5-formamido-1-(5-phospho-D-ribosyl)imidazole-4-carboxamide. The protein operates within purine metabolism; IMP biosynthesis via de novo pathway; IMP from 5-formamido-1-(5-phospho-D-ribosyl)imidazole-4-carboxamide: step 1/1. Catalyzes the cyclization of 5-formylamidoimidazole-4-carboxamide ribonucleotide to IMP. This Methanothrix thermoacetophila (strain DSM 6194 / JCM 14653 / NBRC 101360 / PT) (Methanosaeta thermophila) protein is IMP cyclohydrolase.